The primary structure comprises 328 residues: Fructose-1,6-bisphosphatase class 1 (328 aa).

Mg(2+) is bound by residues Glu-89, Asp-110, Leu-112, and Asp-113. Substrate contacts are provided by residues Asn-206, Tyr-234, 252–254 (YLY), and Lys-264. Glu-270 serves as a coordination point for Mg(2+).

The protein belongs to the FBPase class 1 family. Homotetramer. The cofactor is Mg(2+).

It is found in the cytoplasm. The enzyme catalyses beta-D-fructose 1,6-bisphosphate + H2O = beta-D-fructose 6-phosphate + phosphate. The protein operates within carbohydrate biosynthesis; gluconeogenesis. The chain is Fructose-1,6-bisphosphatase class 1 from Wigglesworthia glossinidia brevipalpis.